Consider the following 431-residue polypeptide: Serine/threonine-protein kinase Sgk1 (431 aa).

Positions 1-60 (MTVKTEAAKGTLTYSRMRGMVAILIAFMKQRRMGLNDFIQKIANNSYACKHPEVQSILKI) are necessary for localization to the mitochondria. Residues 66–92 (PELMNANPSPPPSPSQQINLGPSSNPH) form a disordered region. Phosphoserine is present on S74. S78 bears the Phosphoserine; by MAPK7 mark. Over residues 81–91 (QQINLGPSSNP) the composition is skewed to polar residues. The Protein kinase domain maps to 98 to 355 (FHFLKVIGKG…FMEIKSHVFF (258 aa)). Residues 104–112 (IGKGSFGKV) and K127 each bind ATP. Positions 131-141 (KKAILKKKEEK) match the Nuclear localization signal motif. D222 acts as the Proton acceptor in catalysis. T256 is modified (phosphothreonine; by PDPK1). One can recognise an AGC-kinase C-terminal domain in the interval 356-431 (SLINWDDLIN…SYAPPTDSFL (76 aa)). T369 carries the post-translational modification Phosphothreonine; by PKA. Phosphoserine occurs at positions 397, 401, and 422.

Belongs to the protein kinase superfamily. AGC Ser/Thr protein kinase family. As to quaternary structure, homodimer; disulfide-linked. Forms a trimeric complex with FBXW7 and NOTCH1. Interacts with MAPK3/ERK1, MAPK1/ERK2, MAP2K1/MEK1, MAP2K2/MEK2, NEDD4, NEDD4L, MAPT/TAU, MAPK7, CREB1, SLC9A3R2/NHERF2 and KCNJ1/ROMK1. Associates with the mammalian target of rapamycin complex 2 (mTORC2) via an interaction with MAPKAP1/SIN1. Regulated by phosphorylation. Activated by phosphorylation on Ser-422 by mTORC2, transforming it into a substrate for PDPK1 which phosphorylates it on Thr-256. Phosphorylation on Ser-397 and Ser-401 are also essential for its activity. Phosphorylation on Ser-78 by MAPK7 is required for growth factor-induced cell cycle progression. In terms of processing, ubiquitinated by NEDD4L; which promotes proteasomal degradation. Ubiquitinated by SYVN1 at the endoplasmic reticulum; which promotes rapid proteasomal degradation and maintains a high turnover rate in resting cells. Isoform 2 shows enhanced stability. In terms of tissue distribution, expressed in most tissues with highest levels in the pancreas, followed by placenta, kidney and lung. Isoform 2 is strongly expressed in brain and pancreas, weaker in heart, placenta, lung, liver and skeletal muscle.

The protein localises to the cytoplasm. The protein resides in the nucleus. Its subcellular location is the endoplasmic reticulum membrane. It is found in the cell membrane. It localises to the mitochondrion. It catalyses the reaction L-seryl-[protein] + ATP = O-phospho-L-seryl-[protein] + ADP + H(+). The enzyme catalyses L-threonyl-[protein] + ATP = O-phospho-L-threonyl-[protein] + ADP + H(+). Two specific sites, one in the kinase domain (Thr-256) and the other in the C-terminal regulatory region (Ser-422), need to be phosphorylated for its full activation. Phosphorylation at Ser-397 and Ser-401 are also essential for its activity. Activated by WNK1, WNK2, WNK3 and WNK4; which promote phosphorylation by mTORC2. In terms of biological role, serine/threonine-protein kinase which is involved in the regulation of a wide variety of ion channels, membrane transporters, cellular enzymes, transcription factors, neuronal excitability, cell growth, proliferation, survival, migration and apoptosis. Plays an important role in cellular stress response. Contributes to regulation of renal Na(+) retention, renal K(+) elimination, salt appetite, gastric acid secretion, intestinal Na(+)/H(+) exchange and nutrient transport, insulin-dependent salt sensitivity of blood pressure, salt sensitivity of peripheral glucose uptake, cardiac repolarization and memory consolidation. Up-regulates Na(+) channels: SCNN1A/ENAC, SCN5A and ASIC1/ACCN2, K(+) channels: KCNJ1/ROMK1, KCNA1-5, KCNQ1-5 and KCNE1, epithelial Ca(2+) channels: TRPV5 and TRPV6, chloride channels: BSND, CLCN2 and CFTR, glutamate transporters: SLC1A3/EAAT1, SLC1A2 /EAAT2, SLC1A1/EAAT3, SLC1A6/EAAT4 and SLC1A7/EAAT5, amino acid transporters: SLC1A5/ASCT2, SLC38A1/SN1 and SLC6A19, creatine transporter: SLC6A8, Na(+)/dicarboxylate cotransporter: SLC13A2/NADC1, Na(+)-dependent phosphate cotransporter: SLC34A2/NAPI-2B, glutamate receptor: GRIK2/GLUR6. Up-regulates carriers: SLC9A3/NHE3, SLC12A1/NKCC2, SLC12A3/NCC, SLC5A3/SMIT, SLC2A1/GLUT1, SLC5A1/SGLT1 and SLC15A2/PEPT2. Regulates enzymes: GSK3A/B, PMM2 and Na(+)/K(+) ATPase, and transcription factors: CTNNB1 and nuclear factor NF-kappa-B. Stimulates sodium transport into epithelial cells by enhancing the stability and expression of SCNN1A/ENAC. This is achieved by phosphorylating the NEDD4L ubiquitin E3 ligase, promoting its interaction with 14-3-3 proteins, thereby preventing it from binding to SCNN1A/ENAC and targeting it for degradation. Regulates store-operated Ca(+2) entry (SOCE) by stimulating ORAI1 and STIM1. Regulates KCNJ1/ROMK1 directly via its phosphorylation or indirectly via increased interaction with SLC9A3R2/NHERF2. Phosphorylates MDM2 and activates MDM2-dependent ubiquitination of p53/TP53. Phosphorylates MAPT/TAU and mediates microtubule depolymerization and neurite formation in hippocampal neurons. Phosphorylates SLC2A4/GLUT4 and up-regulates its activity. Phosphorylates APBB1/FE65 and promotes its localization to the nucleus. Phosphorylates MAPK1/ERK2 and activates it by enhancing its interaction with MAP2K1/MEK1 and MAP2K2/MEK2. Phosphorylates FBXW7 and plays an inhibitory role in the NOTCH1 signaling. Phosphorylates FOXO1 resulting in its relocalization from the nucleus to the cytoplasm. Phosphorylates FOXO3, promoting its exit from the nucleus and interference with FOXO3-dependent transcription. Phosphorylates BRAF and MAP3K3/MEKK3 and inhibits their activity. Phosphorylates SLC9A3/NHE3 in response to dexamethasone, resulting in its activation and increased localization at the cell membrane. Phosphorylates CREB1. Necessary for vascular remodeling during angiogenesis. Sustained high levels and activity may contribute to conditions such as hypertension and diabetic nephropathy. Isoform 2 exhibited a greater effect on cell plasma membrane expression of SCNN1A/ENAC and Na(+) transport than isoform 1. In Homo sapiens (Human), this protein is Serine/threonine-protein kinase Sgk1 (SGK1).